A 430-amino-acid polypeptide reads, in one-letter code: Putative FBD-associated F-box protein At5g56440 (430 aa).

An F-box domain is found at 1 to 49 (MDRISLLPDDVVFKILSFVPTKVVVSTNLLSKRWRYLWKHVPKLDYRDP). Positions 349–399 (QWEQPSSVPKCLISSLETVEWIDYKGREVEKKVVMYLLENSRQLKTMAIRS) constitute an FBD domain.

The sequence is that of Putative FBD-associated F-box protein At5g56440 from Arabidopsis thaliana (Mouse-ear cress).